A 416-amino-acid polypeptide reads, in one-letter code: Phosphatidylinositol 5-phosphate 4-kinase type-2 beta (416 aa).

Ser2 is subject to N-acetylserine. Thr8 is modified (phosphothreonine). Ser19 bears the Phosphoserine mark. One can recognise a PIPK domain in the interval Ala38 to Leu415. Positions Val64 to Asp70 are required for interaction with PIP5K1A. Residues Lys94 and Lys150 each carry the N6-acetyllysine modification. ATP is bound by residues Arg202 to Val204 and Lys214. Residues Asn203–Val204 and Lys214 contribute to the GTP site. The residue at position 322 (Thr322) is a Phosphothreonine. The residue at position 326 (Ser326) is a Phosphoserine. Position 369 (Asp369) interacts with GTP.

As to quaternary structure, homodimer. Binds TNFRSF1A. Interacts with PIP4K2A; the interaction suppresses ubiquitination by the SPOP/CUL3 complex. Post-translationally, ubiquitinated by the SPOP/CUL3 complex. Ubiquitination is stimulated by PtdIns5P levels. Phosphorylated on serine residues. Highly expressed in brain, heart, pancreas, skeletal muscle and kidney. Detected at lower levels in placenta, lung and liver.

The protein localises to the endoplasmic reticulum membrane. Its subcellular location is the cell membrane. It localises to the nucleus. The protein resides in the cytoplasm. It catalyses the reaction a 1,2-diacyl-sn-glycero-3-phospho-(1D-myo-inositol-5-phosphate) + ATP = a 1,2-diacyl-sn-glycero-3-phospho-(1D-myo-inositol-4,5-bisphosphate) + ADP + H(+). The catalysed reaction is 1,2-dihexadecanoyl-sn-glycero-3-phospho-(1D-myo-inositol-5-phosphate) + ATP = 1,2-dihexadecanoyl-sn-glycero-3-phospho-(1D-myo-inositol-4,5-bisphosphate) + ADP + H(+). The enzyme catalyses 1,2-dihexadecanoyl-sn-glycero-3-phospho-(1D-myo-inositol-5-phosphate) + GTP = 1,2-dihexadecanoyl-sn-glycero-3-phospho-(1D-myo-inositol-4,5-bisphosphate) + GDP + H(+). Its function is as follows. Participates in the biosynthesis of phosphatidylinositol 4,5-bisphosphate. Preferentially utilizes GTP, rather than ATP, for PI(5)P phosphorylation and its activity reflects changes in direct proportion to the physiological GTP concentration. Its GTP-sensing activity is critical for metabolic adaptation. PIP4Ks negatively regulate insulin signaling through a catalytic-independent mechanism. They interact with PIP5Ks and suppress PIP5K-mediated PtdIns(4,5)P2 synthesis and insulin-dependent conversion to PtdIns(3,4,5)P3. The sequence is that of Phosphatidylinositol 5-phosphate 4-kinase type-2 beta from Homo sapiens (Human).